The following is an 839-amino-acid chain: LPS-assembly protein LptD (839 aa).

Residues 1–21 form the signal peptide; that stretch reads MAIGITACVLSLINYQGLAYS.

It belongs to the LptD family. As to quaternary structure, component of the lipopolysaccharide transport and assembly complex. Interacts with LptE and LptA.

It localises to the cell outer membrane. In terms of biological role, together with LptE, is involved in the assembly of lipopolysaccharide (LPS) at the surface of the outer membrane. This is LPS-assembly protein LptD from Legionella pneumophila subsp. pneumophila (strain Philadelphia 1 / ATCC 33152 / DSM 7513).